A 297-amino-acid chain; its full sequence is Protease HtpX homolog (297 aa).

2 helical membrane-spanning segments follow: residues 14-34 (IFLI…AGYL) and 39-59 (YQFG…SMIF). H143 provides a ligand contact to Zn(2+). E144 is a catalytic residue. H147 lines the Zn(2+) pocket. 2 consecutive transmembrane segments (helical) span residues 153-173 (IRIS…ASMG) and 196-216 (IVFL…ASMV). E225 provides a ligand contact to Zn(2+).

Belongs to the peptidase M48B family. It depends on Zn(2+) as a cofactor.

The protein resides in the cell membrane. This is Protease HtpX homolog from Streptococcus uberis (strain ATCC BAA-854 / 0140J).